The primary structure comprises 334 residues: GTPase Obg (334 aa).

Positions 1-159 (MRFVDEVVIK…KEVRLELNLL (159 aa)) constitute an Obg domain. Residues 160-331 (ADVALLGLPN…LAKKLNEFLQ (172 aa)) enclose the OBG-type G domain. GTP contacts are provided by residues 166–173 (GLPNAGKS), 191–195 (FTTMY), 212–215 (DIPG), 282–285 (NKID), and 312–314 (SAA). Mg(2+) is bound by residues Ser-173 and Thr-193.

The protein belongs to the TRAFAC class OBG-HflX-like GTPase superfamily. OBG GTPase family. Monomer. The cofactor is Mg(2+).

It localises to the cytoplasm. In terms of biological role, an essential GTPase which binds GTP, GDP and possibly (p)ppGpp with moderate affinity, with high nucleotide exchange rates and a fairly low GTP hydrolysis rate. Plays a role in control of the cell cycle, stress response, ribosome biogenesis and in those bacteria that undergo differentiation, in morphogenesis control. The protein is GTPase Obg of Francisella tularensis subsp. holarctica (strain FTNF002-00 / FTA).